A 189-amino-acid chain; its full sequence is Large ribosomal subunit protein uL5 (189 aa).

It belongs to the universal ribosomal protein uL5 family. In terms of assembly, part of the 50S ribosomal subunit; part of the 5S rRNA/L5/L18/L25 subcomplex. Contacts the 5S rRNA and the P site tRNA. Forms a bridge to the 30S subunit in the 70S ribosome.

Its function is as follows. This is one of the proteins that bind and probably mediate the attachment of the 5S RNA into the large ribosomal subunit, where it forms part of the central protuberance. In the 70S ribosome it contacts protein S13 of the 30S subunit (bridge B1b), connecting the 2 subunits; this bridge is implicated in subunit movement. Contacts the P site tRNA; the 5S rRNA and some of its associated proteins might help stabilize positioning of ribosome-bound tRNAs. In Corynebacterium jeikeium (strain K411), this protein is Large ribosomal subunit protein uL5.